The following is a 30-amino-acid chain: uncharacterized protein (30 aa).

This is an uncharacterized protein from Treponema pallidum (strain Nichols).